Consider the following 182-residue polypeptide: uncharacterized protein (182 aa).

Residues 66-133 adopt a coiled-coil conformation; the sequence is QKRKRREIKV…NLEIETNSDS (68 aa).

This is an uncharacterized protein from Acanthamoeba polyphaga (Amoeba).